A 227-amino-acid polypeptide reads, in one-letter code: Lipoprotein-releasing system ATP-binding protein LolD (227 aa).

The ABC transporter domain occupies Leu6–Glu227. Residue Gly42–Ser49 coordinates ATP.

Belongs to the ABC transporter superfamily. Lipoprotein translocase (TC 3.A.1.125) family. The complex is composed of two ATP-binding proteins (LolD) and two transmembrane proteins (LolC and LolE).

It localises to the cell inner membrane. Its function is as follows. Part of the ABC transporter complex LolCDE involved in the translocation of mature outer membrane-directed lipoproteins, from the inner membrane to the periplasmic chaperone, LolA. Responsible for the formation of the LolA-lipoprotein complex in an ATP-dependent manner. The sequence is that of Lipoprotein-releasing system ATP-binding protein LolD from Legionella pneumophila (strain Lens).